Consider the following 500-residue polypeptide: Protein nucleotidyltransferase YdiU (500 aa).

ATP contacts are provided by glycine 96, glycine 98, arginine 99, lysine 119, aspartate 131, glycine 132, arginine 182, and arginine 189. The Proton acceptor role is filled by aspartate 258. 2 residues coordinate Mg(2+): asparagine 259 and aspartate 268. An ATP-binding site is contributed by aspartate 268.

Belongs to the SELO family. Requires Mg(2+) as cofactor. Mn(2+) serves as cofactor.

The catalysed reaction is L-seryl-[protein] + ATP = 3-O-(5'-adenylyl)-L-seryl-[protein] + diphosphate. The enzyme catalyses L-threonyl-[protein] + ATP = 3-O-(5'-adenylyl)-L-threonyl-[protein] + diphosphate. It catalyses the reaction L-tyrosyl-[protein] + ATP = O-(5'-adenylyl)-L-tyrosyl-[protein] + diphosphate. It carries out the reaction L-histidyl-[protein] + UTP = N(tele)-(5'-uridylyl)-L-histidyl-[protein] + diphosphate. The catalysed reaction is L-seryl-[protein] + UTP = O-(5'-uridylyl)-L-seryl-[protein] + diphosphate. The enzyme catalyses L-tyrosyl-[protein] + UTP = O-(5'-uridylyl)-L-tyrosyl-[protein] + diphosphate. Its function is as follows. Nucleotidyltransferase involved in the post-translational modification of proteins. It can catalyze the addition of adenosine monophosphate (AMP) or uridine monophosphate (UMP) to a protein, resulting in modifications known as AMPylation and UMPylation. The polypeptide is Protein nucleotidyltransferase YdiU (Rhizobium johnstonii (strain DSM 114642 / LMG 32736 / 3841) (Rhizobium leguminosarum bv. viciae)).